The chain runs to 462 residues: MAKFRRRTCIILALFILFIFSLMMGLKMLRPNTATFGAPFGLDLLPELHQRTIHLGKNFDFQKSDRINSETNTKNLKSVEITMKPSKASELNLDELPPLNNYLHVFYYSWYGNPQFDGKYIHWNHPVLEHWDPRIAKNYPQGRHNPPDDIGSSFYPELGSYSSRDPSVIETHMRQMRSASIGVLALSWYPPDVNDENGEPTDNLVPTILDKAHKYNLKVTFHIEPYSNRDDQNMYKNVKYIIDKYGNHPAFYRYKTKTGNALPMFYVYDSYITKPEKWANLLTTSGSRSIRNSPYDGLFIALLVEEKHKYDILQSGFDGIYTYFATNGFTYGSSHQNWASLKLFCDKYNLIFIPSVGPGYIDTSIRPWNTQNTRNRINGKYYEIGLSAALQTRPSLISITSFNEWHEGTQIEKAVPKRTSNTVYLDYRPHKPGLYLELTRKWSEKYSKERATYALDRQLPVS.

Over 1–8 the chain is Cytoplasmic; the sequence is MAKFRRRT. Residues 9–29 form a helical; Signal-anchor for type II membrane protein membrane-spanning segment; the sequence is CIILALFILFIFSLMMGLKML. The Lumenal segment spans residues 30–462; that stretch reads RPNTATFGAP…YALDRQLPVS (433 aa). The segment at 60-462 is catalytic; it reads DFQKSDRINS…YALDRQLPVS (403 aa).

It belongs to the glycosyl hydrolase 99 family. In terms of processing, undergoes proteolytic cleavage in the C-terminal region. Highly expressed in the liver and kidney. Expressed at lower levels in muscle, pancreas, heart, placenta, lung and brain.

It is found in the golgi apparatus membrane. It catalyses the reaction N-{alpha-Glc-(1-&gt;3)-alpha-Man-(1-&gt;2)-alpha-Man-(1-&gt;2)-alpha-Man-(1-&gt;3)-[alpha-Man-(1-&gt;2)-alpha-Man-(1-&gt;3)-[alpha-Man-(1-&gt;2)-alpha-Man-(1-&gt;6)]-alpha-Man-(1-&gt;6)]-beta-Man-(1-&gt;4)-beta-GlcNAc-(1-&gt;4)-beta-GlcNAc}-L-asparaginyl-[protein] + H2O = alpha-D-glucosyl-(1-&gt;3)-D-mannopyranose + N(4)-{alpha-D-Man-(1-&gt;2)-alpha-D-Man-(1-&gt;3)-[alpha-D-Man-(1-&gt;2)-alpha-D-Man-(1-&gt;3)-[alpha-D-Man-(1-&gt;2)-alpha-D-Man-(1-&gt;6)]-alpha-D-Man-(1-&gt;6)]-beta-D-Man-(1-&gt;4)-beta-D-GlaNAc-(1-&gt;4)-beta-D-GlcNAc}-L-asparaginyl-[protein] (N-glucan mannose isomer 8A1,2,3B1,2). The protein is Glycoprotein endo-alpha-1,2-mannosidase (MANEA) of Homo sapiens (Human).